The chain runs to 296 residues: Fructose-bisphosphate aldolase class 1 (296 aa).

Glutamate 175 (proton acceptor) is an active-site residue. The Schiff-base intermediate with dihydroxyacetone-P role is filled by lysine 212.

It belongs to the class I fructose-bisphosphate aldolase family.

It carries out the reaction beta-D-fructose 1,6-bisphosphate = D-glyceraldehyde 3-phosphate + dihydroxyacetone phosphate. Its pathway is carbohydrate degradation; glycolysis; D-glyceraldehyde 3-phosphate and glycerone phosphate from D-glucose: step 4/4. The sequence is that of Fructose-bisphosphate aldolase class 1 (fda) from Staphylococcus epidermidis (strain ATCC 12228 / FDA PCI 1200).